A 306-amino-acid polypeptide reads, in one-letter code: Methionyl-tRNA formyltransferase (306 aa).

110 to 113 is a (6S)-5,6,7,8-tetrahydrofolate binding site; the sequence is SLLP.

This sequence belongs to the Fmt family.

It carries out the reaction L-methionyl-tRNA(fMet) + (6R)-10-formyltetrahydrofolate = N-formyl-L-methionyl-tRNA(fMet) + (6S)-5,6,7,8-tetrahydrofolate + H(+). Its function is as follows. Attaches a formyl group to the free amino group of methionyl-tRNA(fMet). The formyl group appears to play a dual role in the initiator identity of N-formylmethionyl-tRNA by promoting its recognition by IF2 and preventing the misappropriation of this tRNA by the elongation apparatus. This Brucella ovis (strain ATCC 25840 / 63/290 / NCTC 10512) protein is Methionyl-tRNA formyltransferase.